The primary structure comprises 273 residues: Ribosomal RNA small subunit methyltransferase A (273 aa).

S-adenosyl-L-methionine-binding residues include Asn-17, Leu-19, Gly-44, Glu-65, and Asn-111.

It belongs to the class I-like SAM-binding methyltransferase superfamily. rRNA adenine N(6)-methyltransferase family. RsmA subfamily.

The protein localises to the cytoplasm. It carries out the reaction adenosine(1518)/adenosine(1519) in 16S rRNA + 4 S-adenosyl-L-methionine = N(6)-dimethyladenosine(1518)/N(6)-dimethyladenosine(1519) in 16S rRNA + 4 S-adenosyl-L-homocysteine + 4 H(+). In terms of biological role, specifically dimethylates two adjacent adenosines (A1518 and A1519) in the loop of a conserved hairpin near the 3'-end of 16S rRNA in the 30S particle. May play a critical role in biogenesis of 30S subunits. This is Ribosomal RNA small subunit methyltransferase A from Buchnera aphidicola subsp. Acyrthosiphon pisum (strain APS) (Acyrthosiphon pisum symbiotic bacterium).